The chain runs to 357 residues: Phosphoribosylformylglycinamidine cyclo-ligase (357 aa).

This sequence belongs to the AIR synthase family.

It is found in the cytoplasm. It carries out the reaction 2-formamido-N(1)-(5-O-phospho-beta-D-ribosyl)acetamidine + ATP = 5-amino-1-(5-phospho-beta-D-ribosyl)imidazole + ADP + phosphate + H(+). Its pathway is purine metabolism; IMP biosynthesis via de novo pathway; 5-amino-1-(5-phospho-D-ribosyl)imidazole from N(2)-formyl-N(1)-(5-phospho-D-ribosyl)glycinamide: step 2/2. The chain is Phosphoribosylformylglycinamidine cyclo-ligase from Rhizobium etli (strain ATCC 51251 / DSM 11541 / JCM 21823 / NBRC 15573 / CFN 42).